A 394-amino-acid polypeptide reads, in one-letter code: Chaperone protein DnaJ (394 aa).

The 65-residue stretch at Asp-4–Gly-68 folds into the J domain. The CR-type zinc-finger motif lies at Gly-136–Thr-218. 8 residues coordinate Zn(2+): Cys-149, Cys-152, Cys-166, Cys-169, Cys-192, Cys-195, Cys-206, and Cys-209. CXXCXGXG motif repeat units follow at residues Cys-149–Gly-156, Cys-166–Gly-173, Cys-192–Gly-199, and Cys-206–Gly-213.

The protein belongs to the DnaJ family. Homodimer. Requires Zn(2+) as cofactor.

Its subcellular location is the cytoplasm. In terms of biological role, participates actively in the response to hyperosmotic and heat shock by preventing the aggregation of stress-denatured proteins and by disaggregating proteins, also in an autonomous, DnaK-independent fashion. Unfolded proteins bind initially to DnaJ; upon interaction with the DnaJ-bound protein, DnaK hydrolyzes its bound ATP, resulting in the formation of a stable complex. GrpE releases ADP from DnaK; ATP binding to DnaK triggers the release of the substrate protein, thus completing the reaction cycle. Several rounds of ATP-dependent interactions between DnaJ, DnaK and GrpE are required for fully efficient folding. Also involved, together with DnaK and GrpE, in the DNA replication of plasmids through activation of initiation proteins. The chain is Chaperone protein DnaJ from Synechococcus sp. (strain JA-3-3Ab) (Cyanobacteria bacterium Yellowstone A-Prime).